A 168-amino-acid polypeptide reads, in one-letter code: Short form salivary protein D7R2 (168 aa).

A signal peptide spans 1–21 (MFKKLLLSVGLVWCLISLGQA). Disulfide bonds link cysteine 30–cysteine 62, cysteine 43–cysteine 168, and cysteine 101–cysteine 120. Noradrenaline contacts are provided by glutamate 31 and arginine 46. Glutamate 31 is a binding site for serotonin. Serotonin is bound by residues histidine 59, tyrosine 118, aspartate 135, and glutamate 138. Histamine is bound by residues tyrosine 118, aspartate 135, and glutamate 138. Noradrenaline is bound by residues aspartate 135 and glutamate 138.

This sequence belongs to the PBP/GOBP family. As to expression, female saliva (at protein level). Female salivary gland. Not detected in female carcass without salivary glands. Not detected in male tissues.

The protein resides in the secreted. Modulates blood feeding of female mosquitoes on vertebrate species by binding and sequestering different mediators involved in the host response. Binds serotonin, noradrenaline, histamine and adrenaline. Inhibits histamine-, serotonin- and noradrenaline-induced smooth muscle contraction. Exhibits vasodilating activity. The polypeptide is Short form salivary protein D7R2 (Anopheles gambiae (African malaria mosquito)).